A 203-amino-acid polypeptide reads, in one-letter code: UPF0301 protein Sde_3637 (203 aa).

It belongs to the UPF0301 (AlgH) family.

This Saccharophagus degradans (strain 2-40 / ATCC 43961 / DSM 17024) protein is UPF0301 protein Sde_3637.